The chain runs to 286 residues: Ribonuclease Z (286 aa).

Positions 61, 63, 65, 66, 153, 176, and 240 each coordinate Zn(2+). Residue Asp-65 is the Proton acceptor of the active site.

Belongs to the RNase Z family. In terms of assembly, homodimer. Zn(2+) is required as a cofactor.

It catalyses the reaction Endonucleolytic cleavage of RNA, removing extra 3' nucleotides from tRNA precursor, generating 3' termini of tRNAs. A 3'-hydroxy group is left at the tRNA terminus and a 5'-phosphoryl group is left at the trailer molecule.. Its function is as follows. Zinc phosphodiesterase, which displays some tRNA 3'-processing endonuclease activity. Probably involved in tRNA maturation, by removing a 3'-trailer from precursor tRNA. In Mycolicibacterium gilvum (strain PYR-GCK) (Mycobacterium gilvum (strain PYR-GCK)), this protein is Ribonuclease Z.